A 132-amino-acid chain; its full sequence is Small ribosomal subunit protein uS8 (132 aa).

This sequence belongs to the universal ribosomal protein uS8 family. As to quaternary structure, part of the 30S ribosomal subunit. Contacts proteins S5 and S12.

Functionally, one of the primary rRNA binding proteins, it binds directly to 16S rRNA central domain where it helps coordinate assembly of the platform of the 30S subunit. The polypeptide is Small ribosomal subunit protein uS8 (Bacillus velezensis (strain DSM 23117 / BGSC 10A6 / LMG 26770 / FZB42) (Bacillus amyloliquefaciens subsp. plantarum)).